Here is a 267-residue protein sequence, read N- to C-terminus: 4-hydroxy-tetrahydrodipicolinate reductase (267 aa).

Residues 12–17 (GPRGRM), 100–102 (GTT), and 126–129 (APNF) contribute to the NAD(+) site. H156 serves as the catalytic Proton donor/acceptor. H157 contacts (S)-2,3,4,5-tetrahydrodipicolinate. Residue K160 is the Proton donor of the active site. 166–167 (GT) serves as a coordination point for (S)-2,3,4,5-tetrahydrodipicolinate.

It belongs to the DapB family.

Its subcellular location is the cytoplasm. It catalyses the reaction (S)-2,3,4,5-tetrahydrodipicolinate + NAD(+) + H2O = (2S,4S)-4-hydroxy-2,3,4,5-tetrahydrodipicolinate + NADH + H(+). The enzyme catalyses (S)-2,3,4,5-tetrahydrodipicolinate + NADP(+) + H2O = (2S,4S)-4-hydroxy-2,3,4,5-tetrahydrodipicolinate + NADPH + H(+). It participates in amino-acid biosynthesis; L-lysine biosynthesis via DAP pathway; (S)-tetrahydrodipicolinate from L-aspartate: step 4/4. In terms of biological role, catalyzes the conversion of 4-hydroxy-tetrahydrodipicolinate (HTPA) to tetrahydrodipicolinate. In Bacillus velezensis (strain DSM 23117 / BGSC 10A6 / LMG 26770 / FZB42) (Bacillus amyloliquefaciens subsp. plantarum), this protein is 4-hydroxy-tetrahydrodipicolinate reductase.